The following is a 478-amino-acid chain: 3-isopropylmalate dehydratase large subunit (478 aa).

Positions 357, 418, and 421 each coordinate [4Fe-4S] cluster.

Belongs to the aconitase/IPM isomerase family. LeuC type 1 subfamily. As to quaternary structure, heterodimer of LeuC and LeuD. The cofactor is [4Fe-4S] cluster.

It catalyses the reaction (2R,3S)-3-isopropylmalate = (2S)-2-isopropylmalate. It functions in the pathway amino-acid biosynthesis; L-leucine biosynthesis; L-leucine from 3-methyl-2-oxobutanoate: step 2/4. Functionally, catalyzes the isomerization between 2-isopropylmalate and 3-isopropylmalate, via the formation of 2-isopropylmaleate. In Novosphingobium aromaticivorans (strain ATCC 700278 / DSM 12444 / CCUG 56034 / CIP 105152 / NBRC 16084 / F199), this protein is 3-isopropylmalate dehydratase large subunit.